The sequence spans 307 residues: UDP-3-O-acyl-N-acetylglucosamine deacetylase (307 aa).

The Zn(2+) site is built by histidine 79, histidine 239, and aspartate 243. Histidine 266 serves as the catalytic Proton donor.

Belongs to the LpxC family. The cofactor is Zn(2+).

The catalysed reaction is a UDP-3-O-[(3R)-3-hydroxyacyl]-N-acetyl-alpha-D-glucosamine + H2O = a UDP-3-O-[(3R)-3-hydroxyacyl]-alpha-D-glucosamine + acetate. Its pathway is glycolipid biosynthesis; lipid IV(A) biosynthesis; lipid IV(A) from (3R)-3-hydroxytetradecanoyl-[acyl-carrier-protein] and UDP-N-acetyl-alpha-D-glucosamine: step 2/6. In terms of biological role, catalyzes the hydrolysis of UDP-3-O-myristoyl-N-acetylglucosamine to form UDP-3-O-myristoylglucosamine and acetate, the committed step in lipid A biosynthesis. This is UDP-3-O-acyl-N-acetylglucosamine deacetylase from Tolumonas auensis (strain DSM 9187 / NBRC 110442 / TA 4).